The following is a 292-amino-acid chain: Tetrahydromethanopterin:alpha-L-glutamate ligase (292 aa).

Residues 103–286 enclose the ATP-grasp domain; sequence SFLMEVHKIP…IAQNLIDEAL (184 aa). Residues lysine 138, 176 to 188, and arginine 204 contribute to the ATP site; that span reads QEFVNNPNNVYRD. Mg(2+) is bound by residues aspartate 247, glutamate 259, and asparagine 261. Positions 247, 259, and 261 each coordinate Mn(2+).

This sequence belongs to the RimK family. MptN subfamily. In terms of assembly, homodimer. Mg(2+) is required as a cofactor. Requires Mn(2+) as cofactor.

It carries out the reaction 5,6,7,8-tetrahydromethanopterin + L-glutamate + ATP = 5,6,7,8-tetrahydrosarcinapterin + ADP + phosphate + H(+). The protein operates within cofactor biosynthesis; 5,6,7,8-tetrahydrosarcinapterin biosynthesis. In terms of biological role, catalyzes the ATP or GTP-dependent addition of one L-glutamate molecule to tetrahydromethanopterin, producing tetrahydrosarcinapterin. The polypeptide is Tetrahydromethanopterin:alpha-L-glutamate ligase (mptN) (Methanococcus maripaludis (strain DSM 14266 / JCM 13030 / NBRC 101832 / S2 / LL)).